The sequence spans 198 residues: DnaJ homolog subfamily C member 12 (198 aa).

Met1 is subject to N-acetylmethionine. One can recognise a J domain in the interval 14 to 79 (DYYALLGCDE…ESRARYDHWR (66 aa)). Residues 114 to 177 (EGSGQTFTSS…GLSDLNCGHL (64 aa)) form a disordered region. Positions 116-125 (SGQTFTSSVP) are enriched in polar residues. Basic and acidic residues predominate over residues 126 to 156 (NKERSEQRETKKGDPDSNPEKMKQKEPKFPE). Phosphoserine is present on residues Ser160, Ser166, and Ser182.

As to quaternary structure, interacts with HSPA8. Interacts with TPH1. Interacts with TPH2. As to expression, highest levels of expression are detected in kidney, pineal gland, and raphe nuclei in the brain where it localizes to serotonerigic neurons.

The protein localises to the cytoplasm. In terms of biological role, probable co-chaperone that participates in the proper folding of biopterin-dependent aromatic amino acid hydroxylases, which include phenylalanine-4-hydroxylase (PAH), tyrosine 3-monooxygenase (TH) and peripheral and neuronal tryptophan hydroxylases (TPH1 and TPH2). The sequence is that of DnaJ homolog subfamily C member 12 (Dnajc12) from Mus musculus (Mouse).